A 248-amino-acid polypeptide reads, in one-letter code: UPF0173 metal-dependent hydrolase Hlac_1347 (248 aa).

The protein belongs to the UPF0173 family.

This is UPF0173 metal-dependent hydrolase Hlac_1347 from Halorubrum lacusprofundi (strain ATCC 49239 / DSM 5036 / JCM 8891 / ACAM 34).